The primary structure comprises 152 residues: Transcriptional regulator MraZ (152 aa).

2 consecutive SpoVT-AbrB domains span residues 5 to 52 and 81 to 124; these read ASAI…PIHE and AHEV…DEQS.

The protein belongs to the MraZ family. In terms of assembly, forms oligomers.

Its subcellular location is the cytoplasm. It is found in the nucleoid. This chain is Transcriptional regulator MraZ, found in Shewanella baltica (strain OS223).